The primary structure comprises 323 residues: Pantothenate kinase (323 aa).

An ATP-binding site is contributed by 101–108 (GSVAVGKS).

Belongs to the prokaryotic pantothenate kinase family.

It localises to the cytoplasm. The enzyme catalyses (R)-pantothenate + ATP = (R)-4'-phosphopantothenate + ADP + H(+). Its pathway is cofactor biosynthesis; coenzyme A biosynthesis; CoA from (R)-pantothenate: step 1/5. This chain is Pantothenate kinase, found in Xanthobacter autotrophicus (strain ATCC BAA-1158 / Py2).